A 223-amino-acid chain; its full sequence is MDTAVVYADLHLARTGEPKREPPPSLSPDTCQCPRWHRLALKLGCACLILLVLSVIGLGVLVLTLLQKPLIQNSPADVQENRTKTTDSPAKLKCPKDWHSHQDKCFHVSQTSITWKGSLADCGGKGATLLLVQDQEELRFLRNLTKRISSSFWIGLSYTLSDEKWKWINGSTLNSDALNITGDTEKDSCASVSQDKVLSESCDSDNIWICQKELKRESTCNDS.

The Cytoplasmic segment spans residues 1–45; sequence MDTAVVYADLHLARTGEPKREPPPSLSPDTCQCPRWHRLALKLGC. The short motif at 5-10 is the ITIM motif element; it reads VVYADL. Positions 31–34 match the LCK-binding motif motif; it reads CQCP. The helical; Signal-anchor for type II membrane protein transmembrane segment at 46–66 threads the bilayer; sequence ACLILLVLSVIGLGVLVLTLL. The Extracellular segment spans residues 67–223; it reads QKPLIQNSPA…LKRESTCNDS (157 aa). The region spanning 101–211 is the C-type lectin domain; that stretch reads HQDKCFHVSQ…CDSDNIWICQ (111 aa). 2 disulfides stabilise this stretch: cysteine 122-cysteine 210 and cysteine 189-cysteine 202.

In terms of assembly, homodimer; disulfide-linked. Interacts with tyrosine kinase LCK. Binds PTPN6/SHP-1 in a phosphorylation-dependent manner. In terms of tissue distribution, expressed in a subset of natural killer cells.

It localises to the membrane. Receptor for CLEC2D/OCIL. Ligand-binding contributes to inhibition of cytotoxic natural killer (NK) cells. May mediate MHC class I-independent 'missing-self' recognition of allografts, tumor cells and virus-infected cells. The protein is Killer cell lectin-like receptor subfamily B member 1B allele A of Rattus norvegicus (Rat).